A 273-amino-acid chain; its full sequence is 4-hydroxybenzoate octaprenyltransferase (273 aa).

Helical transmembrane passes span 7-27 (IGIY…SEGF), 30-50 (LKLL…GCVI), 83-103 (FFVL…WLTI), 122-142 (WTYF…LMAF), 146-166 (LNEI…WTVI), 197-217 (LIIG…SNVF), 221-241 (ISYH…QYLI), and 253-273 (FLHN…SVGL).

The protein belongs to the UbiA prenyltransferase family. The cofactor is Mg(2+).

It localises to the cell inner membrane. The catalysed reaction is all-trans-octaprenyl diphosphate + 4-hydroxybenzoate = 4-hydroxy-3-(all-trans-octaprenyl)benzoate + diphosphate. Its pathway is cofactor biosynthesis; ubiquinone biosynthesis. Catalyzes the prenylation of para-hydroxybenzoate (PHB) with an all-trans polyprenyl group. Mediates the second step in the final reaction sequence of ubiquinone-8 (UQ-8) biosynthesis, which is the condensation of the polyisoprenoid side chain with PHB, generating the first membrane-bound Q intermediate 3-octaprenyl-4-hydroxybenzoate. The protein is 4-hydroxybenzoate octaprenyltransferase of Vesicomyosocius okutanii subsp. Calyptogena okutanii (strain HA).